Here is a 564-residue protein sequence, read N- to C-terminus: Proline--tRNA ligase 1 (564 aa).

Belongs to the class-II aminoacyl-tRNA synthetase family. ProS type 1 subfamily. As to quaternary structure, homodimer.

Its subcellular location is the cytoplasm. It catalyses the reaction tRNA(Pro) + L-proline + ATP = L-prolyl-tRNA(Pro) + AMP + diphosphate. Functionally, catalyzes the attachment of proline to tRNA(Pro) in a two-step reaction: proline is first activated by ATP to form Pro-AMP and then transferred to the acceptor end of tRNA(Pro). As ProRS can inadvertently accommodate and process non-cognate amino acids such as alanine and cysteine, to avoid such errors it has two additional distinct editing activities against alanine. One activity is designated as 'pretransfer' editing and involves the tRNA(Pro)-independent hydrolysis of activated Ala-AMP. The other activity is designated 'posttransfer' editing and involves deacylation of mischarged Ala-tRNA(Pro). The misacylated Cys-tRNA(Pro) is not edited by ProRS. This chain is Proline--tRNA ligase 1, found in Streptomyces avermitilis (strain ATCC 31267 / DSM 46492 / JCM 5070 / NBRC 14893 / NCIMB 12804 / NRRL 8165 / MA-4680).